Consider the following 931-residue polypeptide: Dual serine/threonine and tyrosine protein kinase (931 aa).

Positions 1-24 are disordered; that stretch reads MEGDAPQRVSERVSGPGPGGGGGG. Residues 397 to 424 are a coiled coil; it reads RKKENELYESLMNIANRKQEEMKDMICE. One can recognise a Protein kinase domain in the interval 654–908; sequence PKLGQELGRG…PLLGIVQPML (255 aa). ATP is bound by residues 660–668 and Lys683; that span reads LGRGQYGVV. The Proton acceptor role is filled by Asp779.

This sequence belongs to the protein kinase superfamily. Ser/Thr protein kinase family.

Its subcellular location is the cytoplasm. The protein localises to the cell membrane. It is found in the apical cell membrane. It localises to the basolateral cell membrane. The protein resides in the cell junction. It catalyses the reaction L-seryl-[protein] + ATP = O-phospho-L-seryl-[protein] + ADP + H(+). The catalysed reaction is L-threonyl-[protein] + ATP = O-phospho-L-threonyl-[protein] + ADP + H(+). It carries out the reaction L-tyrosyl-[protein] + ATP = O-phospho-L-tyrosyl-[protein] + ADP + H(+). Acts as a positive regulator of ERK phosphorylation downstream of fibroblast growth factor-receptor activation. Involved in the regulation of both caspase-dependent apoptosis and caspase-independent cell death. In the skin, it plays a predominant role in suppressing caspase-dependent apoptosis in response to UV stress in a range of dermal cell types. The chain is Dual serine/threonine and tyrosine protein kinase (DSTYK) from Canis lupus familiaris (Dog).